The chain runs to 346 residues: MLKVAVVGASGYTGVELLRILHCHPEVAVTCITSEQSAGKPVSDLFPSLRGRYAQVLENLEPIRVAEKADIIFTALPHKAAMEVVPTFLKLGKRVIDLSADYRFNDAATYEQWYEPHMNPHLLPKAVYGLPEVRRAAVKGAKLVANPGCYPTSVILGLQPLLKHKLIETAGIISDSASGVSGAGRGAKVDNLYCEVNEGFKAYGVGGVHRHTPEMEQELSLLADERITITFTPHLAPMDRGILSTIYGRLLTPATTAELAGLYAEFYGGEPFVRVLPAGGVPSTAHVRGSNFCDIGVVVDQRTGRVIVVSAIDNLVKGASGQAVQNMNIMCGLPEGLGLEGLALVP.

Residue Cys149 is part of the active site.

Belongs to the NAGSA dehydrogenase family. Type 1 subfamily.

Its subcellular location is the cytoplasm. The catalysed reaction is N-acetyl-L-glutamate 5-semialdehyde + phosphate + NADP(+) = N-acetyl-L-glutamyl 5-phosphate + NADPH + H(+). It functions in the pathway amino-acid biosynthesis; L-arginine biosynthesis; N(2)-acetyl-L-ornithine from L-glutamate: step 3/4. Catalyzes the NADPH-dependent reduction of N-acetyl-5-glutamyl phosphate to yield N-acetyl-L-glutamate 5-semialdehyde. The sequence is that of N-acetyl-gamma-glutamyl-phosphate reductase from Geobacter sulfurreducens (strain ATCC 51573 / DSM 12127 / PCA).